The chain runs to 388 residues: Succinate--CoA ligase [ADP-forming] subunit beta (388 aa).

Residues K9–K245 enclose the ATP-grasp domain. Residues K46, G53 to G55, E100, Y103, and E108 contribute to the ATP site. The Mg(2+) site is built by N200 and D214. Substrate is bound by residues N265 and G322–V324.

This sequence belongs to the succinate/malate CoA ligase beta subunit family. As to quaternary structure, heterotetramer of two alpha and two beta subunits. It depends on Mg(2+) as a cofactor.

It catalyses the reaction succinate + ATP + CoA = succinyl-CoA + ADP + phosphate. The catalysed reaction is GTP + succinate + CoA = succinyl-CoA + GDP + phosphate. It functions in the pathway carbohydrate metabolism; tricarboxylic acid cycle; succinate from succinyl-CoA (ligase route): step 1/1. In terms of biological role, succinyl-CoA synthetase functions in the citric acid cycle (TCA), coupling the hydrolysis of succinyl-CoA to the synthesis of either ATP or GTP and thus represents the only step of substrate-level phosphorylation in the TCA. The beta subunit provides nucleotide specificity of the enzyme and binds the substrate succinate, while the binding sites for coenzyme A and phosphate are found in the alpha subunit. In Psychrobacter arcticus (strain DSM 17307 / VKM B-2377 / 273-4), this protein is Succinate--CoA ligase [ADP-forming] subunit beta.